Reading from the N-terminus, the 294-residue chain is 4-hydroxy-tetrahydrodipicolinate synthase (294 aa).

Pyruvate is bound at residue Thr-44. Tyr-132 (proton donor/acceptor) is an active-site residue. The Schiff-base intermediate with substrate role is filled by Lys-161. Ile-206 contacts pyruvate.

This sequence belongs to the DapA family. Homotetramer; dimer of dimers.

The protein localises to the cytoplasm. The enzyme catalyses L-aspartate 4-semialdehyde + pyruvate = (2S,4S)-4-hydroxy-2,3,4,5-tetrahydrodipicolinate + H2O + H(+). The protein operates within amino-acid biosynthesis; L-lysine biosynthesis via DAP pathway; (S)-tetrahydrodipicolinate from L-aspartate: step 3/4. In terms of biological role, catalyzes the condensation of (S)-aspartate-beta-semialdehyde [(S)-ASA] and pyruvate to 4-hydroxy-tetrahydrodipicolinate (HTPA). In Thermotoga petrophila (strain ATCC BAA-488 / DSM 13995 / JCM 10881 / RKU-1), this protein is 4-hydroxy-tetrahydrodipicolinate synthase.